Reading from the N-terminus, the 391-residue chain is Lipid-A-disaccharide synthase (391 aa).

Belongs to the LpxB family.

It catalyses the reaction a lipid X + a UDP-2-N,3-O-bis[(3R)-3-hydroxyacyl]-alpha-D-glucosamine = a lipid A disaccharide + UDP + H(+). It functions in the pathway bacterial outer membrane biogenesis; LPS lipid A biosynthesis. Functionally, condensation of UDP-2,3-diacylglucosamine and 2,3-diacylglucosamine-1-phosphate to form lipid A disaccharide, a precursor of lipid A, a phosphorylated glycolipid that anchors the lipopolysaccharide to the outer membrane of the cell. The polypeptide is Lipid-A-disaccharide synthase (Aromatoleum aromaticum (strain DSM 19018 / LMG 30748 / EbN1) (Azoarcus sp. (strain EbN1))).